Here is a 247-residue protein sequence, read N- to C-terminus: OCIA domain-containing protein 1 (247 aa).

Residues 1–112 (MNGRADFREP…KKLENSPLGE (112 aa)) form the OCIA domain. Phosphoserine is present on residues S108, S116, and S123. Disordered regions lie at residues 113–153 (ALRS…ADNI) and 167–230 (SASM…MQER). Polar residues-rich tracts occupy residues 136 to 146 (SNVSGQSSFGT) and 168 to 177 (ASMNESTPTG). 2 stretches are compositionally biased toward basic and acidic residues: residues 192 to 210 (ESPK…KNRE) and 218 to 230 (HKTD…MQER). Residue S193 is modified to Phosphoserine.

The protein belongs to the OCIAD1 family. Interacts with OCIAD2. Interacts with STAT3. As to expression, expressed at high levels in the brain and at lower levels in the heart, ovary, testis and kidney. Expression is strongest in embryonic stem cells and in the blood vessels.

It localises to the endosome. Functionally, maintains stem cell potency. Increases STAT3 phosphorylation and controls ERK phosphorylation. May act as a scaffold, increasing STAT3 recruitment onto endosomes. The polypeptide is OCIA domain-containing protein 1 (Mus musculus (Mouse)).